Here is a 239-residue protein sequence, read N- to C-terminus: Probable transcriptional regulatory protein Aave_3203 (239 aa).

The interval 1-20 (MAGHSKWANIQHRKGRQDEK) is disordered.

The protein belongs to the TACO1 family.

The protein resides in the cytoplasm. This chain is Probable transcriptional regulatory protein Aave_3203, found in Paracidovorax citrulli (strain AAC00-1) (Acidovorax citrulli).